Here is a 694-residue protein sequence, read N- to C-terminus: LMBR1 domain-containing protein 2 homolog (694 aa).

The Extracellular segment spans residues 1–3 (MAY). A helical membrane pass occupies residues 4 to 26 (LLSFGIVAALFLASISLYRYGNI). Residues 27–30 (PRQH) lie on the Cytoplasmic side of the membrane. A helical membrane pass occupies residues 31–51 (ILVTLSVLTAWCFSFLIVFTI). The Extracellular portion of the chain corresponds to 52 to 106 (PLDVTSTLYRQCVEEHRPTPAPNVTNTSSATVGPPPQCQEPWGMVPASVFPNLWR). N-linked (GlcNAc...) asparagine glycosylation is found at Asn-74 and Asn-77. Residues 107–127 (IIYWSSQFLTWLIMPLMQSYL) form a helical membrane-spanning segment. The Cytoplasmic segment spans residues 128–144 (KAGDFTVKGKLKSALIE). A helical transmembrane segment spans residues 145–165 (NAIYYGSYLFICGVLLIYIAV). Over 166 to 181 (KGESLDWQKLKAIASS) the chain is Extracellular. Residues 182-202 (ASNTWGLFLLILLLGYALVEV) traverse the membrane as a helical segment. Topologically, residues 203–381 (PRSLWNNAKP…ECLLKAPFLK (179 aa)) are cytoplasmic. The stretch at 222 to 249 (KAAKLSTEKAEAEEHVDDILESLQGLSR) forms a coiled coil. The chain crosses the membrane as a helical span at residues 382-402 (TMCVLTATMSAMVVWSELTFF). The Extracellular segment spans residues 403-426 (SRHPVLSIFANVIYVAKESYDFFT). Residues 427–447 (IEVFSMVVLCYFFYCTYSTIL) traverse the membrane as a helical segment. Residues 448–467 (RIRFLNLYYLAPHHQTNEHS) are Cytoplasmic-facing. The helical transmembrane segment at 468 to 488 (LIFSGMLLCRLTPPMCLNFLG) threads the bilayer. Over 489–514 (LIHMDTHIIPNRIMETVYTQIMGHMD) the chain is Extracellular. Residues 515-535 (VIGIISNGFNIYFPMCMLAFC) form a helical membrane-spanning segment. Topologically, residues 536–694 (LATWFSLGSR…PPPRGLFDDV (159 aa)) are cytoplasmic. A coiled-coil region spans residues 564–592 (ELVQEGKDLIAREKRRRQRAEEAMARRRD). A disordered region spans residues 673-694 (DYEAETDGRIVGPPPRGLFDDV).

The protein belongs to the LIMR family.

Its subcellular location is the membrane. The chain is LMBR1 domain-containing protein 2 homolog from Drosophila melanogaster (Fruit fly).